The primary structure comprises 549 residues: MTLASIRRGYHVIKTLLQYGLDDVLPPKMTPWYFKLARNSLFWIRNKHKNKPGGERLKLAMQELGPVYIKLGQMLSTRRDLLSDEWASELAMLQDKVPPFDGALARQAIEAELKAPIESLFDDFNETPLASASISQVHTATLKSNGKDVVLKVLRPNVETKIQADLQLMSQTAKLIEYLLGEGNRLRPAEVIEDYRVTILGELNLKLEALNAVKLRNNFLDSDALYVPYVYEEFCYPRLMVMERIYGISVSDIAALKAQGTNFKLLAERGVELFFTQVFRDNFFHADMHPGNIFISRDHPENPYYIGLDCGIMGTLSEVDKRYLAENFLAFFNRDYHRIAQLYIESGWVSEKTDLQAFEQAIKVVCEPMFNKPLDEISFGHVLLELFRTARHFDIVVQPQLVLLEKTLLYIEGLGRQLYPQLDLWQTAKPFLEQWMADQVGPKAMFKKVSTKLPYWADKLPEFPELIYDNLKLGRKLLSSQQQMLDKYLKYQQQAHKSNYLLITSAVLLICGTLLINRDATLWTPYVCLVSGIILWFVGWRSRPKNRKF.

The Protein kinase domain maps to 123-501; the sequence is DFNETPLASA…QQQAHKSNYL (379 aa). ATP contacts are provided by residues 129 to 137 and Lys-152; that span reads LASASISQV. The active-site Proton acceptor is Asp-287. Helical transmembrane passes span 496–516 and 520–540; these read HKSNYLLITSAVLLICGTLLI and ATLWTPYVCLVSGIILWFVGW.

Belongs to the ABC1 family. UbiB subfamily.

It is found in the cell inner membrane. Its pathway is cofactor biosynthesis; ubiquinone biosynthesis [regulation]. Its function is as follows. Is probably a protein kinase regulator of UbiI activity which is involved in aerobic coenzyme Q (ubiquinone) biosynthesis. The chain is Probable protein kinase UbiB from Shewanella baltica (strain OS185).